Here is a 329-residue protein sequence, read N- to C-terminus: Malate dehydrogenase (329 aa).

Position 12–18 (12–18) interacts with NAD(+); it reads GAAGQIG. Substrate-binding residues include Arg95 and Arg101. NAD(+)-binding positions include Asn108, Gln115, and 132-134; that span reads VGN. 2 residues coordinate substrate: Asn134 and Arg165. The Proton acceptor role is filled by His190.

Belongs to the LDH/MDH superfamily. MDH type 2 family. Homodimer.

The catalysed reaction is (S)-malate + NAD(+) = oxaloacetate + NADH + H(+). Its activity is regulated as follows. Substrate inhibition is observed at high concentrations of oxaloacetate. Catalyzes the reversible oxidation of malate to oxaloacetate. Catalyzes the reduction of oxaloacetate more efficiently than the oxidation of malate. In Syntrophobacter fumaroxidans (strain DSM 10017 / MPOB), this protein is Malate dehydrogenase.